A 1150-amino-acid chain; its full sequence is Cohesin subunit SCC3 (1150 aa).

Over residues 1-12 (MTAVRRSTRIRT) the composition is skewed to basic residues. The interval 1–122 (MTAVRRSTRI…PAYHRSKKDQ (122 aa)) is disordered. Phosphoserine is present on serine 28. Residues 32–43 (VESDKITAKTQH) show a composition bias toward basic and acidic residues. Positions 44–72 (EEEEEQDTGESEESSSEDDYEDQDDDDYV) are enriched in acidic residues. Residues 77–87 (AKRKSRKRKPK) show a composition bias toward basic residues. The stretch at 305-349 (LTQQAVNLEKNYLAKLSKQLSLEEKKKRPNNKTLEKLESTIAETQ) forms a coiled coil. An SCD domain is found at 367 to 457 (FVHRYKDVSD…ERFKTKILEV (91 aa)). Serine 628 bears the Phosphoserine mark. Positions 1065 to 1150 (ENPEPNKKNI…IDNSDEITQD (86 aa)) are disordered. Positions 1083–1101 (QREKAPLQPNSERETDHAN) are enriched in basic and acidic residues.

The protein belongs to the SCC3 family. As to quaternary structure, interacts directly with MCD1 in cohesin complex. Cohesin complexes are composed of the SMC1 and SMC3 heterodimer attached via their hinge domain, MCD1 which link them, and IRR1/SCC3, which interacts with MCD1. The cohesin complex also interacts with SCC2, which is required for its association with chromosomes. Interacts with LIN1. In terms of processing, acetylated by ECO1.

The protein resides in the nucleus. The protein localises to the chromosome. Its subcellular location is the centromere. Component of cohesin complex, a complex required for the cohesion of sister chromatids after DNA replication. The cohesin complex apparently forms a large proteinaceous ring within which sister chromatids can be trapped. At anaphase, the MCD1/SCC1 subunit of the complex is cleaved and dissociates from chromatin, allowing sister chromatids to segregate. The cohesin complex may also play a role in spindle pole assembly during mitosis. The polypeptide is Cohesin subunit SCC3 (IRR1) (Saccharomyces cerevisiae (strain ATCC 204508 / S288c) (Baker's yeast)).